A 365-amino-acid polypeptide reads, in one-letter code: MTITGIIAEFNPFHNGHKYLLDQAEGLKIVAMSGNFMQRGEPAIVDKWTRAQMALENGADLVVELPFLVSVQAADFFGQGAVDILDRLGIDSLVFGTEEVRDYQKIADLYTEKGAEMEKFVENLPDSLSYPQKTQAMWKEFAGLDFSGNTPNHVLALAYAKAVAGRNIKLHPIQRQGAGYHSVNKDVDFASATALRQHQKDQDFLERFMPSVALFEQASKVIWEDYFPLLRYQILSNPDLTTIYQVNQEMAVRIKEAIKTAQSVEELVELVTTKRYTKARVRRLLTYILVQARESDLPEGIHVLGFTEKGRQHLKYLKGQVSLVSRIGKEPWDVMTQKADQIYQLGNPSIAEQNFGRVPIRIETN.

Residues I7–L20, G96, N152, and R175 each bind ATP.

This sequence belongs to the TmcAL family.

The protein resides in the cytoplasm. It catalyses the reaction cytidine(34) in elongator tRNA(Met) + acetate + ATP = N(4)-acetylcytidine(34) in elongator tRNA(Met) + AMP + diphosphate. Catalyzes the formation of N(4)-acetylcytidine (ac(4)C) at the wobble position of elongator tRNA(Met), using acetate and ATP as substrates. First activates an acetate ion to form acetyladenylate (Ac-AMP) and then transfers the acetyl group to tRNA to form ac(4)C34. The polypeptide is tRNA(Met) cytidine acetate ligase (Streptococcus pneumoniae serotype 19F (strain G54)).